A 154-amino-acid chain; its full sequence is Myoglobin (154 aa).

Residues Gly2–Lys148 enclose the Globin domain. Residue Ser4 is modified to Phosphoserine. Residue His65 coordinates nitrite. His65 lines the O2 pocket. Thr68 carries the post-translational modification Phosphothreonine. His94 is a binding site for heme b.

Belongs to the globin family. In terms of assembly, monomeric.

It localises to the cytoplasm. Its subcellular location is the sarcoplasm. It carries out the reaction Fe(III)-heme b-[protein] + nitric oxide + H2O = Fe(II)-heme b-[protein] + nitrite + 2 H(+). It catalyses the reaction H2O2 + AH2 = A + 2 H2O. Functionally, monomeric heme protein which primary function is to store oxygen and facilitate its diffusion within muscle tissues. Reversibly binds oxygen through a pentacoordinated heme iron and enables its timely and efficient release as needed during periods of heightened demand. Depending on the oxidative conditions of tissues and cells, and in addition to its ability to bind oxygen, it also has a nitrite reductase activity whereby it regulates the production of bioactive nitric oxide. Under stress conditions, like hypoxia and anoxia, it also protects cells against reactive oxygen species thanks to its pseudoperoxidase activity. The sequence is that of Myoglobin (MB) from Orycteropus afer (Aardvark).